The primary structure comprises 238 residues: Purine nucleoside phosphorylase DeoD-type (238 aa).

His4 contacts a purine D-ribonucleoside. Phosphate is bound by residues Gly20, Arg24, Arg43, and 87–90; that span reads RIGS. Residues 181–183 and 205–206 each bind a purine D-ribonucleoside; these read EME and SD. Catalysis depends on Asp206, which acts as the Proton donor.

This sequence belongs to the PNP/UDP phosphorylase family. As to quaternary structure, homohexamer; trimer of homodimers.

It catalyses the reaction a purine D-ribonucleoside + phosphate = a purine nucleobase + alpha-D-ribose 1-phosphate. The enzyme catalyses a purine 2'-deoxy-D-ribonucleoside + phosphate = a purine nucleobase + 2-deoxy-alpha-D-ribose 1-phosphate. Catalyzes the reversible phosphorolytic breakdown of the N-glycosidic bond in the beta-(deoxy)ribonucleoside molecules, with the formation of the corresponding free purine bases and pentose-1-phosphate. This chain is Purine nucleoside phosphorylase DeoD-type, found in Mycoplasma genitalium (strain ATCC 33530 / DSM 19775 / NCTC 10195 / G37) (Mycoplasmoides genitalium).